We begin with the raw amino-acid sequence, 508 residues long: Asparagine--tRNA ligase (508 aa).

It belongs to the class-II aminoacyl-tRNA synthetase family. In terms of assembly, homodimer.

The protein localises to the cytoplasm. It catalyses the reaction tRNA(Asn) + L-asparagine + ATP = L-asparaginyl-tRNA(Asn) + AMP + diphosphate + H(+). In Streptococcus suis (strain 05ZYH33), this protein is Asparagine--tRNA ligase.